Here is a 327-residue protein sequence, read N- to C-terminus: MEAIKGSEVNVPDAVIAWLLDGHGGVKPLQDDAVIDKDHPCWLHLNYANPESAQWLTETPLLPNLVRDALAGESLRPRVTRMGDGTLITLRCINGSTDERPDQLVAMRLYIDERLIVSTRQRKVLALDDIIHDLNEGSGPADVGGWLVDACDALTDHASEFIEELHDKIIDLEDNLLEEIVPPRGVLALLRKQLIVMRRYMSPQRDVFSRLASERFSWMTDDHRRRMQDIADRLGRGLDEIDACIARTAVMADEISQTMQESLSRRSYTMSLMAMVFLPSTFLTGLFGVNLGGIPGGGWHLGFSVFCVALVLLIGGVTWWLHRSKWL.

Over 1 to 273 the chain is Cytoplasmic; sequence MEAIKGSEVN…SRRSYTMSLM (273 aa). Residues 274–294 traverse the membrane as a helical segment; sequence AMVFLPSTFLTGLFGVNLGGI. At 295 to 300 the chain is on the periplasmic side; sequence PGGGWH. Residues 301–321 traverse the membrane as a helical segment; it reads LGFSVFCVALVLLIGGVTWWL. At 322–327 the chain is on the cytoplasmic side; the sequence is HRSKWL.

The protein belongs to the CorA metal ion transporter (MIT) (TC 1.A.35) family.

It is found in the cell inner membrane. The enzyme catalyses Zn(2+)(out) + H(+)(out) = Zn(2+)(in) + H(+)(in). Functionally, zinc transporter. Acts as a Zn(2+):proton symporter, which likely mediates zinc ion uptake. In Cronobacter sakazakii (strain ATCC BAA-894) (Enterobacter sakazakii), this protein is Zinc transport protein ZntB.